Here is a 66-residue protein sequence, read N- to C-terminus: MRITEMRELTDEELNQELNNLKEKLFQLRFQLELGQLKNSSSIKQVKKDIARIKTILKERELGIRR.

Belongs to the universal ribosomal protein uL29 family.

The protein is Large ribosomal subunit protein uL29 of Petrotoga mobilis (strain DSM 10674 / SJ95).